Consider the following 459-residue polypeptide: VGFKAGVKDYKLTYYTPDYETKDTDILAAFRVSPQPGVPPEEAGAAVAAESSTGTWTTVWTDGLTSLDRYKGRCYHIEPVAGEENQYIAYVAYPLDLFEEGSVTNMFTSIVGNVFGFKALRALRLEDLRIPTAYVKTFQGPPHGIQVERDKLNKYGRPLLGCTIKPKLGLSAKNYGRAVYECLRGGLDFTKDDENVNSQPFMRWRDRFVFCAEAIYKAQAETGEIKGHYLNATAGTCEEMMKRAIFARELGVPIVMHDYLTGGFTANTSLAHYCRDNGLLLHIHRAMHAVIDRQKNHGIHFRVLAKALRMSGGDHIHAGTVVGKLEGERDITLGFVDLLRDDFIEKDRSRGIYFTQDWVSLPGVLPVASGGIHVWHMPALTEIFGDDSVLQFGGGTLGHPWGNAPGAVANRVALEACVQARNEGRDLAREGNEIIREASKWSPELAAACEVWKEIKFEF.

Lys-4 is modified (N6,N6,N6-trimethyllysine). 2 residues coordinate substrate: Asn-113 and Thr-163. Lys-165 serves as the catalytic Proton acceptor. Position 167 (Lys-167) interacts with substrate. 3 residues coordinate Mg(2+): Lys-191, Asp-193, and Glu-194. An N6-carboxylysine modification is found at Lys-191. Catalysis depends on His-284, which acts as the Proton acceptor. Positions 285, 317, and 369 each coordinate substrate.

It belongs to the RuBisCO large chain family. Type I subfamily. In terms of assembly, heterohexadecamer of 8 large chains and 8 small chains; disulfide-linked. The disulfide link is formed within the large subunit homodimers. Mg(2+) is required as a cofactor. Post-translationally, the disulfide bond which can form in the large chain dimeric partners within the hexadecamer appears to be associated with oxidative stress and protein turnover.

It is found in the plastid. Its subcellular location is the chloroplast. The enzyme catalyses 2 (2R)-3-phosphoglycerate + 2 H(+) = D-ribulose 1,5-bisphosphate + CO2 + H2O. The catalysed reaction is D-ribulose 1,5-bisphosphate + O2 = 2-phosphoglycolate + (2R)-3-phosphoglycerate + 2 H(+). RuBisCO catalyzes two reactions: the carboxylation of D-ribulose 1,5-bisphosphate, the primary event in carbon dioxide fixation, as well as the oxidative fragmentation of the pentose substrate in the photorespiration process. Both reactions occur simultaneously and in competition at the same active site. The polypeptide is Ribulose bisphosphate carboxylase large chain (Ceratopetalum gummiferum (New South Wales Christmas bush)).